The following is a 355-amino-acid chain: Probable GTP 3',8-cyclase (355 aa).

Residues 5 to 233 (AYGRPLKDLR…GRLHNRRVYR (229 aa)) form the Radical SAM core domain. Position 14 (Arg-14) interacts with GTP. Cys-21, Cys-25, and Cys-28 together coordinate [4Fe-4S] cluster. Lys-69 provides a ligand contact to GTP. Gly-73 contacts S-adenosyl-L-methionine. Thr-97 lines the GTP pocket. Ser-121 serves as a coordination point for S-adenosyl-L-methionine. Residue Lys-157 coordinates GTP. Residues Cys-252 and Cys-255 each coordinate [4Fe-4S] cluster. 257–259 (RVR) is a binding site for GTP. Cys-269 contributes to the [4Fe-4S] cluster binding site.

The protein belongs to the radical SAM superfamily. MoaA family. [4Fe-4S] cluster is required as a cofactor.

It catalyses the reaction GTP + AH2 + S-adenosyl-L-methionine = (8S)-3',8-cyclo-7,8-dihydroguanosine 5'-triphosphate + 5'-deoxyadenosine + L-methionine + A + H(+). It participates in cofactor biosynthesis; molybdopterin biosynthesis. In terms of biological role, catalyzes the cyclization of GTP to (8S)-3',8-cyclo-7,8-dihydroguanosine 5'-triphosphate. This chain is Probable GTP 3',8-cyclase, found in Aeropyrum pernix (strain ATCC 700893 / DSM 11879 / JCM 9820 / NBRC 100138 / K1).